A 213-amino-acid polypeptide reads, in one-letter code: Glycerol-3-phosphate acyltransferase (213 aa).

6 helical membrane-spanning segments follow: residues 2 to 22 (ITIVLLILAYLLGSIPSGLWI), 52 to 74 (AGMATFVIDFFKGTLATLLPIIF), 81 to 100 (PLIFGLLAVIGHTFPIFAGF), 112 to 132 (VIFGFAPIFCLYLAIIFFGAL), 143 to 163 (VTASIAAVIGVLLFPLFGFIL), and 164 to 184 (SNYDFLFIAIILALASLIIIR).

The protein belongs to the PlsY family. As to quaternary structure, probably interacts with PlsX.

It localises to the cell membrane. The catalysed reaction is an acyl phosphate + sn-glycerol 3-phosphate = a 1-acyl-sn-glycero-3-phosphate + phosphate. Its pathway is lipid metabolism; phospholipid metabolism. Catalyzes the transfer of an acyl group from acyl-phosphate (acyl-PO(4)) to glycerol-3-phosphate (G3P) to form lysophosphatidic acid (LPA). This enzyme utilizes acyl-phosphate as fatty acyl donor, but not acyl-CoA or acyl-ACP. In Streptococcus pneumoniae (strain CGSP14), this protein is Glycerol-3-phosphate acyltransferase.